Here is a 477-residue protein sequence, read N- to C-terminus: Transmembrane and coiled-coil domain protein 3 (477 aa).

A Phosphoserine modification is found at S46. Residues 112–153 (KQVFEKKNQKSAHSIAQLQKKLEQYHRKLREIEQNGASRSSK) are a coiled coil. 2 disordered regions span residues 168 to 188 (KDAHVKSRTAPHCMESSKSGM) and 249 to 277 (PKYGSDDECSSGTSGSADSNGNQSFGAGG). S253 is subject to Phosphoserine. Residues 258–273 (SSGTSGSADSNGNQSF) show a composition bias toward polar residues. Residues 282-398 (DSQGKLAVIL…KLELHQQEQQ (117 aa)) are a coiled coil. The next 2 membrane-spanning stretches (helical) occupy residues 417 to 437 (VILAFMTVILVCVSTIAKFVS) and 450 to 470 (FFAVTLLAIFCKNWDHILCAI).

Belongs to the TEX28 family. In terms of assembly, may form homodimers and heterodimers with TMCC2 or TMCC3 via the coiled-coil domains. Interacts with ribosomal proteins RPL4 and RPS6. Widely expressed, with highest levels in brain, spinal cord and testis.

Its subcellular location is the endoplasmic reticulum membrane. The sequence is that of Transmembrane and coiled-coil domain protein 3 from Homo sapiens (Human).